The chain runs to 737 residues: Elongation factor 2 (737 aa).

A tr-type G domain is found at 18 to 262 (TRVRNIGIIA…TVIKFVPNPR (245 aa)). GTP-binding positions include 27–34 (AHVDHGKT), 93–97 (DTPGH), and 147–150 (NKVD). Position 604 is a diphthamide (His-604).

This sequence belongs to the TRAFAC class translation factor GTPase superfamily. Classic translation factor GTPase family. EF-G/EF-2 subfamily.

The protein resides in the cytoplasm. Its function is as follows. Catalyzes the GTP-dependent ribosomal translocation step during translation elongation. During this step, the ribosome changes from the pre-translocational (PRE) to the post-translocational (POST) state as the newly formed A-site-bound peptidyl-tRNA and P-site-bound deacylated tRNA move to the P and E sites, respectively. Catalyzes the coordinated movement of the two tRNA molecules, the mRNA and conformational changes in the ribosome. The protein is Elongation factor 2 (fusA) of Sulfurisphaera tokodaii (strain DSM 16993 / JCM 10545 / NBRC 100140 / 7) (Sulfolobus tokodaii).